Here is a 167-residue protein sequence, read N- to C-terminus: Lipoprotein signal peptidase (167 aa).

Transmembrane regions (helical) follow at residues 9 to 29 (AWLYLSIAVSVFLLDIITKNL), 68 to 88 (LPLLLITPVIALIITFLYALY), and 98 to 118 (MGLIGGGALGNLYDRLFLGMV). Catalysis depends on residues Asp120 and Asp138. A helical membrane pass occupies residues 130–150 (YWPAFNIADASISIGIALLIL).

Belongs to the peptidase A8 family.

It localises to the cell inner membrane. The enzyme catalyses Release of signal peptides from bacterial membrane prolipoproteins. Hydrolyzes -Xaa-Yaa-Zaa-|-(S,diacylglyceryl)Cys-, in which Xaa is hydrophobic (preferably Leu), and Yaa (Ala or Ser) and Zaa (Gly or Ala) have small, neutral side chains.. Its pathway is protein modification; lipoprotein biosynthesis (signal peptide cleavage). Functionally, this protein specifically catalyzes the removal of signal peptides from prolipoproteins. The sequence is that of Lipoprotein signal peptidase from Aquifex aeolicus (strain VF5).